The sequence spans 215 residues: Thiamine-phosphate synthase (215 aa).

4-amino-2-methyl-5-(diphosphooxymethyl)pyrimidine-binding positions include Gln-43–Lys-47 and Asn-78. Mg(2+) is bound by residues Asp-79 and Asp-98. Ser-117 contributes to the 4-amino-2-methyl-5-(diphosphooxymethyl)pyrimidine binding site. Residue Thr-143–Ser-145 coordinates 2-[(2R,5Z)-2-carboxy-4-methylthiazol-5(2H)-ylidene]ethyl phosphate. Lys-146 contributes to the 4-amino-2-methyl-5-(diphosphooxymethyl)pyrimidine binding site. 2-[(2R,5Z)-2-carboxy-4-methylthiazol-5(2H)-ylidene]ethyl phosphate contacts are provided by residues Gly-174 and Ile-194–Ser-195.

It belongs to the thiamine-phosphate synthase family. The cofactor is Mg(2+).

The enzyme catalyses 2-[(2R,5Z)-2-carboxy-4-methylthiazol-5(2H)-ylidene]ethyl phosphate + 4-amino-2-methyl-5-(diphosphooxymethyl)pyrimidine + 2 H(+) = thiamine phosphate + CO2 + diphosphate. The catalysed reaction is 2-(2-carboxy-4-methylthiazol-5-yl)ethyl phosphate + 4-amino-2-methyl-5-(diphosphooxymethyl)pyrimidine + 2 H(+) = thiamine phosphate + CO2 + diphosphate. It carries out the reaction 4-methyl-5-(2-phosphooxyethyl)-thiazole + 4-amino-2-methyl-5-(diphosphooxymethyl)pyrimidine + H(+) = thiamine phosphate + diphosphate. It functions in the pathway cofactor biosynthesis; thiamine diphosphate biosynthesis; thiamine phosphate from 4-amino-2-methyl-5-diphosphomethylpyrimidine and 4-methyl-5-(2-phosphoethyl)-thiazole: step 1/1. Its function is as follows. Condenses 4-methyl-5-(beta-hydroxyethyl)thiazole monophosphate (THZ-P) and 2-methyl-4-amino-5-hydroxymethyl pyrimidine pyrophosphate (HMP-PP) to form thiamine monophosphate (TMP). This Lactococcus lactis subsp. lactis (strain IL1403) (Streptococcus lactis) protein is Thiamine-phosphate synthase.